The sequence spans 138 residues: Small ribosomal subunit protein uS11 (138 aa).

Disordered stretches follow at residues Met-1–Ala-29 and Gly-117–Val-138. Positions Lys-13–Lys-22 are enriched in basic residues.

Belongs to the universal ribosomal protein uS11 family. Part of the 30S ribosomal subunit. Interacts with proteins S7 and S18. Binds to IF-3.

In terms of biological role, located on the platform of the 30S subunit, it bridges several disparate RNA helices of the 16S rRNA. Forms part of the Shine-Dalgarno cleft in the 70S ribosome. The protein is Small ribosomal subunit protein uS11 of Mycobacterium ulcerans (strain Agy99).